Here is a 330-residue protein sequence, read N- to C-terminus: Ketol-acid reductoisomerase (NADP(+)) (330 aa).

Residues 2-182 (VETFYEKDAD…GCTRAGVIKT (181 aa)) form the KARI N-terminal Rossmann domain. NADP(+)-binding positions include 25-28 (YGSQ), lysine 48, serine 51, serine 53, and 83-86 (DEVQ). Histidine 108 is an active-site residue. Glycine 134 is a binding site for NADP(+). A KARI C-terminal knotted domain is found at 183–328 (TFKEETETDL…EKLRAMMPWI (146 aa)). Aspartate 191, glutamate 195, glutamate 227, and glutamate 231 together coordinate Mg(2+). Serine 252 provides a ligand contact to substrate.

The protein belongs to the ketol-acid reductoisomerase family. It depends on Mg(2+) as a cofactor.

It carries out the reaction (2R)-2,3-dihydroxy-3-methylbutanoate + NADP(+) = (2S)-2-acetolactate + NADPH + H(+). The enzyme catalyses (2R,3R)-2,3-dihydroxy-3-methylpentanoate + NADP(+) = (S)-2-ethyl-2-hydroxy-3-oxobutanoate + NADPH + H(+). The protein operates within amino-acid biosynthesis; L-isoleucine biosynthesis; L-isoleucine from 2-oxobutanoate: step 2/4. Its pathway is amino-acid biosynthesis; L-valine biosynthesis; L-valine from pyruvate: step 2/4. In terms of biological role, involved in the biosynthesis of branched-chain amino acids (BCAA). Catalyzes an alkyl-migration followed by a ketol-acid reduction of (S)-2-acetolactate (S2AL) to yield (R)-2,3-dihydroxy-isovalerate. In the isomerase reaction, S2AL is rearranged via a Mg-dependent methyl migration to produce 3-hydroxy-3-methyl-2-ketobutyrate (HMKB). In the reductase reaction, this 2-ketoacid undergoes a metal-dependent reduction by NADPH to yield (R)-2,3-dihydroxy-isovalerate. This chain is Ketol-acid reductoisomerase (NADP(+)), found in Petrotoga mobilis (strain DSM 10674 / SJ95).